The primary structure comprises 695 residues: Elongation factor G (695 aa).

A tr-type G domain is found at 8-282; it reads EKTRNIGIMA…AVLDYLPAPT (275 aa). GTP is bound by residues 17-24, 81-85, and 135-138; these read AHIDAGKT, DTPGH, and NKMD.

This sequence belongs to the TRAFAC class translation factor GTPase superfamily. Classic translation factor GTPase family. EF-G/EF-2 subfamily.

It localises to the cytoplasm. Functionally, catalyzes the GTP-dependent ribosomal translocation step during translation elongation. During this step, the ribosome changes from the pre-translocational (PRE) to the post-translocational (POST) state as the newly formed A-site-bound peptidyl-tRNA and P-site-bound deacylated tRNA move to the P and E sites, respectively. Catalyzes the coordinated movement of the two tRNA molecules, the mRNA and conformational changes in the ribosome. This chain is Elongation factor G, found in Listeria welshimeri serovar 6b (strain ATCC 35897 / DSM 20650 / CCUG 15529 / CIP 8149 / NCTC 11857 / SLCC 5334 / V8).